A 349-amino-acid polypeptide reads, in one-letter code: UDP-3-O-acylglucosamine N-acyltransferase (349 aa).

The Proton acceptor role is filled by histidine 248.

Belongs to the transferase hexapeptide repeat family. LpxD subfamily. As to quaternary structure, homotrimer.

It catalyses the reaction a UDP-3-O-[(3R)-3-hydroxyacyl]-alpha-D-glucosamine + a (3R)-hydroxyacyl-[ACP] = a UDP-2-N,3-O-bis[(3R)-3-hydroxyacyl]-alpha-D-glucosamine + holo-[ACP] + H(+). It participates in bacterial outer membrane biogenesis; LPS lipid A biosynthesis. In terms of biological role, catalyzes the N-acylation of UDP-3-O-acylglucosamine using 3-hydroxyacyl-ACP as the acyl donor. Is involved in the biosynthesis of lipid A, a phosphorylated glycolipid that anchors the lipopolysaccharide to the outer membrane of the cell. This is UDP-3-O-acylglucosamine N-acyltransferase from Gloeothece citriformis (strain PCC 7424) (Cyanothece sp. (strain PCC 7424)).